A 282-amino-acid chain; its full sequence is Bifunctional protein FolD (282 aa).

NADP(+) contacts are provided by residues 165–167 (GAS) and Ile231.

The protein belongs to the tetrahydrofolate dehydrogenase/cyclohydrolase family. Homodimer.

It catalyses the reaction (6R)-5,10-methylene-5,6,7,8-tetrahydrofolate + NADP(+) = (6R)-5,10-methenyltetrahydrofolate + NADPH. The catalysed reaction is (6R)-5,10-methenyltetrahydrofolate + H2O = (6R)-10-formyltetrahydrofolate + H(+). It functions in the pathway one-carbon metabolism; tetrahydrofolate interconversion. In terms of biological role, catalyzes the oxidation of 5,10-methylenetetrahydrofolate to 5,10-methenyltetrahydrofolate and then the hydrolysis of 5,10-methenyltetrahydrofolate to 10-formyltetrahydrofolate. This is Bifunctional protein FolD from Francisella tularensis subsp. novicida (strain U112).